A 146-amino-acid chain; its full sequence is 3-hydroxyacyl-[acyl-carrier-protein] dehydratase FabZ (146 aa).

Histidine 48 is a catalytic residue.

Belongs to the thioester dehydratase family. FabZ subfamily.

Its subcellular location is the cytoplasm. It catalyses the reaction a (3R)-hydroxyacyl-[ACP] = a (2E)-enoyl-[ACP] + H2O. In terms of biological role, involved in unsaturated fatty acids biosynthesis. Catalyzes the dehydration of short chain beta-hydroxyacyl-ACPs and long chain saturated and unsaturated beta-hydroxyacyl-ACPs. This is 3-hydroxyacyl-[acyl-carrier-protein] dehydratase FabZ from Campylobacter lari (strain RM2100 / D67 / ATCC BAA-1060).